Here is a 164-residue protein sequence, read N- to C-terminus: 2-keto-3-deoxy-D-glycero-D-galacto-9-phosphonononic acid phosphatase (164 aa).

Residues Asp10 and Asp12 each contribute to the Mg(2+) site. Substrate contacts are provided by residues Thr34, 54–56 (TGE), 64–67 (RAEK), and Lys80. Residue Asp103 participates in Mg(2+) binding. Position 106 (Asn106) interacts with substrate.

This sequence belongs to the KdsC family. In terms of assembly, homotetramer. Mg(2+) is required as a cofactor.

The catalysed reaction is 3-deoxy-D-glycero-beta-D-galacto-non-2-ulopyranosonate 9-phosphate + H2O = 3-deoxy-D-glycero-beta-D-galacto-non-2-ulopyranosonate + phosphate. Involved in the biosynthesis of 2-keto-3-deoxy-D-glycero-D-galacto-nononic acid used in cell-wall polysaccharides. Catalyzes the hydrolysis of 2-keto-3-deoxy-D-glycero-D-galacto-9-phosphonononic acid (KDN-9-P) to yield 2-keto-3-deoxy-D-glycero-D-galacto-nononic acid (KDN). Also able to hydrolyze N-acetylneuraminate-9-phosphate (Neu5NAc-9-P), 2-keto-3-deoxy-D-manno-octulosonate-8-phosphate (KDO-8-P), phosphoenolpyruvate (PEP), gluconate 6-phosphate, tyrosine phosphate ester and glucose-6-P as substrate. This chain is 2-keto-3-deoxy-D-glycero-D-galacto-9-phosphonononic acid phosphatase, found in Bacteroides thetaiotaomicron (strain ATCC 29148 / DSM 2079 / JCM 5827 / CCUG 10774 / NCTC 10582 / VPI-5482 / E50).